The chain runs to 358 residues: 3-isopropylmalate dehydrogenase (358 aa).

75–88 (GPKWETLPPEKQPE) is a binding site for NAD(+). Substrate is bound by residues arginine 96, arginine 106, arginine 135, and aspartate 225. Mg(2+)-binding residues include aspartate 225, aspartate 249, and aspartate 253. Residue 283-295 (GSAPDIAGKGVAN) coordinates NAD(+).

The protein belongs to the isocitrate and isopropylmalate dehydrogenases family. LeuB type 1 subfamily. In terms of assembly, homodimer. It depends on Mg(2+) as a cofactor. Requires Mn(2+) as cofactor.

The protein resides in the cytoplasm. The enzyme catalyses (2R,3S)-3-isopropylmalate + NAD(+) = 4-methyl-2-oxopentanoate + CO2 + NADH. The protein operates within amino-acid biosynthesis; L-leucine biosynthesis; L-leucine from 3-methyl-2-oxobutanoate: step 3/4. Its function is as follows. Catalyzes the oxidation of 3-carboxy-2-hydroxy-4-methylpentanoate (3-isopropylmalate) to 3-carboxy-4-methyl-2-oxopentanoate. The product decarboxylates to 4-methyl-2 oxopentanoate. The chain is 3-isopropylmalate dehydrogenase from Leptospira interrogans serogroup Icterohaemorrhagiae serovar copenhageni (strain Fiocruz L1-130).